Reading from the N-terminus, the 149-residue chain is Transcriptional repressor NrdR (149 aa).

A zinc finger lies at 3 to 34 (CPFCSAVDTKVIDSRLVAEGHQVRRRRECLLC). The region spanning 49–139 (PRVIKSNGSR…VYRSFEDIRE (91 aa)) is the ATP-cone domain.

This sequence belongs to the NrdR family. Requires Zn(2+) as cofactor.

Negatively regulates transcription of bacterial ribonucleotide reductase nrd genes and operons by binding to NrdR-boxes. In Aeromonas salmonicida (strain A449), this protein is Transcriptional repressor NrdR.